Reading from the N-terminus, the 71-residue chain is Peptide Ctri10261 (71 aa).

A signal peptide spans 1–23 (MKIPLILVTIAIILLMVPTESDA). F37 carries the phenylalanine amide modification. Residues 41-71 (SLKNRDYFDYMQDPSLSNADLRELEELLEDY) constitute a propeptide that is removed on maturation.

Belongs to the non-disulfide-bridged peptide (NDBP) superfamily. Short antimicrobial peptide (group 4) family. Expressed by the venom gland.

Its subcellular location is the secreted. Antimicrobial peptide. This is Peptide Ctri10261 from Chaerilus tricostatus (Scorpion).